The primary structure comprises 110 residues: Acid stress chaperone HdeA (110 aa).

An N-terminal signal peptide occupies residues 1-21 (MKKVLGVILGGLLLLPVVSNA). The cysteines at positions 39 and 87 are disulfide-linked.

Belongs to the HdeA family.

Its subcellular location is the periplasm. Its function is as follows. Required for optimal acid stress protection. Exhibits a chaperone-like activity only at low pH by suppressing non-specifically the aggregation of denaturated periplasmic proteins. The protein is Acid stress chaperone HdeA of Escherichia coli O157:H7.